We begin with the raw amino-acid sequence, 96 residues long: UPF0298 protein LCA_1075 (96 aa).

The protein belongs to the UPF0298 family.

It is found in the cytoplasm. This Latilactobacillus sakei subsp. sakei (strain 23K) (Lactobacillus sakei subsp. sakei) protein is UPF0298 protein LCA_1075.